A 181-amino-acid polypeptide reads, in one-letter code: Ribosome maturation factor RimM (181 aa).

In terms of domain architecture, PRC barrel spans 98 to 177 (EGEFFYCDLV…KITTHNAKTL (80 aa)).

This sequence belongs to the RimM family. Binds ribosomal protein uS19.

Its subcellular location is the cytoplasm. Functionally, an accessory protein needed during the final step in the assembly of 30S ribosomal subunit, possibly for assembly of the head region. Essential for efficient processing of 16S rRNA. May be needed both before and after RbfA during the maturation of 16S rRNA. It has affinity for free ribosomal 30S subunits but not for 70S ribosomes. The chain is Ribosome maturation factor RimM from Helicobacter pylori (strain HPAG1).